A 56-amino-acid polypeptide reads, in one-letter code: MAHENVWFSHPRRFGKGSRQCRVCSSHTGLVRKYDLNICRQCFREKANDIGFHKYR.

Zn(2+) is bound by residues Cys-21 and Cys-24. Ser-25 is modified (phosphoserine). Cys-39 and Cys-42 together coordinate Zn(2+).

It belongs to the universal ribosomal protein uS14 family. Component of the small ribosomal subunit (SSU). Mature yeast ribosomes consist of a small (40S) and a large (60S) subunit. The 40S small subunit contains 1 molecule of ribosomal RNA (18S rRNA) and 33 different proteins (encoded by 57 genes). The large 60S subunit contains 3 rRNA molecules (25S, 5.8S and 5S rRNA) and 46 different proteins (encoded by 81 genes). The cofactor is Zn(2+).

It localises to the cytoplasm. Its function is as follows. Component of the ribosome, a large ribonucleoprotein complex responsible for the synthesis of proteins in the cell. The small ribosomal subunit (SSU) binds messenger RNAs (mRNAs) and translates the encoded message by selecting cognate aminoacyl-transfer RNA (tRNA) molecules. The large subunit (LSU) contains the ribosomal catalytic site termed the peptidyl transferase center (PTC), which catalyzes the formation of peptide bonds, thereby polymerizing the amino acids delivered by tRNAs into a polypeptide chain. The nascent polypeptides leave the ribosome through a tunnel in the LSU and interact with protein factors that function in enzymatic processing, targeting, and the membrane insertion of nascent chains at the exit of the ribosomal tunnel. The polypeptide is Small ribosomal subunit protein uS14B (Saccharomyces cerevisiae (strain ATCC 204508 / S288c) (Baker's yeast)).